A 373-amino-acid chain; its full sequence is Queuine tRNA-ribosyltransferase (373 aa).

Catalysis depends on aspartate 89, which acts as the Proton acceptor. Substrate-binding positions include 89–93 (DSGGF), aspartate 143, glutamine 187, and glycine 214. Residues 245–251 (GVGKPED) form an RNA binding region. Aspartate 264 (nucleophile) is an active-site residue. An RNA binding; important for wobble base 34 recognition region spans residues 269-273 (TRNAR). Positions 302, 304, 307, and 333 each coordinate Zn(2+).

This sequence belongs to the queuine tRNA-ribosyltransferase family. As to quaternary structure, homodimer. Within each dimer, one monomer is responsible for RNA recognition and catalysis, while the other monomer binds to the replacement base PreQ1. Zn(2+) is required as a cofactor.

The enzyme catalyses 7-aminomethyl-7-carbaguanine + guanosine(34) in tRNA = 7-aminomethyl-7-carbaguanosine(34) in tRNA + guanine. Its pathway is tRNA modification; tRNA-queuosine biosynthesis. Its function is as follows. Catalyzes the base-exchange of a guanine (G) residue with the queuine precursor 7-aminomethyl-7-deazaguanine (PreQ1) at position 34 (anticodon wobble position) in tRNAs with GU(N) anticodons (tRNA-Asp, -Asn, -His and -Tyr). Catalysis occurs through a double-displacement mechanism. The nucleophile active site attacks the C1' of nucleotide 34 to detach the guanine base from the RNA, forming a covalent enzyme-RNA intermediate. The proton acceptor active site deprotonates the incoming PreQ1, allowing a nucleophilic attack on the C1' of the ribose to form the product. After dissociation, two additional enzymatic reactions on the tRNA convert PreQ1 to queuine (Q), resulting in the hypermodified nucleoside queuosine (7-(((4,5-cis-dihydroxy-2-cyclopenten-1-yl)amino)methyl)-7-deazaguanosine). The sequence is that of Queuine tRNA-ribosyltransferase from Tolumonas auensis (strain DSM 9187 / NBRC 110442 / TA 4).